The primary structure comprises 209 residues: Uracil phosphoribosyltransferase (209 aa).

Residues Arg79, Arg104, and 131–139 (DPMLATGGS) contribute to the 5-phospho-alpha-D-ribose 1-diphosphate site. Residues Ile194 and 199–201 (GDA) contribute to the uracil site. Asp200 contacts 5-phospho-alpha-D-ribose 1-diphosphate.

This sequence belongs to the UPRTase family. It depends on Mg(2+) as a cofactor.

It catalyses the reaction UMP + diphosphate = 5-phospho-alpha-D-ribose 1-diphosphate + uracil. Its pathway is pyrimidine metabolism; UMP biosynthesis via salvage pathway; UMP from uracil: step 1/1. Its activity is regulated as follows. Allosterically activated by GTP. Catalyzes the conversion of uracil and 5-phospho-alpha-D-ribose 1-diphosphate (PRPP) to UMP and diphosphate. In Alkaliphilus oremlandii (strain OhILAs) (Clostridium oremlandii (strain OhILAs)), this protein is Uracil phosphoribosyltransferase.